Reading from the N-terminus, the 82-residue chain is Large ribosomal subunit protein uL23 (82 aa).

Belongs to the universal ribosomal protein uL23 family. In terms of assembly, part of the 50S ribosomal subunit. Contacts protein L29.

In terms of biological role, binds to 23S rRNA. One of the proteins that surrounds the polypeptide exit tunnel on the outside of the ribosome. This Sulfurisphaera tokodaii (strain DSM 16993 / JCM 10545 / NBRC 100140 / 7) (Sulfolobus tokodaii) protein is Large ribosomal subunit protein uL23.